A 41-amino-acid chain; its full sequence is Pi-stichotoxin-Hcr5c (41 aa).

Cystine bridges form between Cys-4/Cys-37, Cys-6/Cys-30, and Cys-20/Cys-38.

The protein belongs to the sea anemone type 3 (BDS) potassium channel toxin family.

Its subcellular location is the secreted. The protein localises to the nematocyst. In terms of biological role, weakly and reversibly inhibits rat homomeric ASIC1 (isoform ASIC1a) (IC(50)=4.95 uM), and ASIC3 (IC(50)=17 uM). ASIC1a current inhibition and ASIC3 transient current inhibition are not complete, and reach a maximum of 70% inhibition and 80%, respectively. The polypeptide is Pi-stichotoxin-Hcr5c (Radianthus crispa (Leathery sea anemone)).